The chain runs to 580 residues: Jasmonoyl--L-amino acid synthetase JAR6 (580 aa).

Ser-100 contacts ATP. Ser-103 contacts jasmonate. ATP contacts are provided by residues Met-120, Thr-123, Gly-164, Asn-169, and 332–337; that span reads GSSEGW. 167–171 provides a ligand contact to an L-alpha-amino acid; it reads TTNVY. 329–332 is a jasmonate binding site; sequence ADYG. 534–538 provides a ligand contact to an L-alpha-amino acid; the sequence is KILDH.

The protein belongs to the IAA-amido conjugating enzyme family.

The enzyme catalyses a jasmonate + an L-alpha-amino acid + ATP = a jasmonyl-L-amino acid + AMP + diphosphate + H(+). Catalyzes the synthesis of jasmonate-amino acid conjugates by adenylation. Catalyzes the conjugation of jasmonate (JA) to Ile, Leu and Val. Catalyzes the conjugation of JA to Ile that may mediate defense signaling and resistance to the herbivore Manduca sexta caterpillars. This Nicotiana attenuata (Coyote tobacco) protein is Jasmonoyl--L-amino acid synthetase JAR6 (JAR6).